The sequence spans 437 residues: Vacuolar protein sorting-associated protein 4A (437 aa).

The MIT domain maps to 2–80 (TTSTLQKAID…KDYLRNKEKH (79 aa)). N6-acetyllysine is present on lysine 8. Residues 15 to 37 (KATEEDKAKNYEEALRLYQHAVE) are a coiled coil. Residues 75 to 106 (RNKEKHGKKPVKENQSEGKGSDSDSEGDNPEK) are disordered. Over residues 84–96 (PVKENQSEGKGSD) the composition is skewed to basic and acidic residues. 2 positions are modified to phosphoserine: serine 95 and serine 97. Residue 167-174 (GPPGTGKS) participates in ATP binding.

The protein belongs to the AAA ATPase family. Proposed to be monomeric or homodimeric in nucleotide-free form and to oligomerize upon binding to ATP to form two stacked hexameric or heptameric rings with a central pore through which ESCRT-III substrates are translocated in an ATP-dependent manner. Interacts with CHMP1A, CHMP1B, CHMP2A, CHMP2B, CHMP3, CHMP4A, CHMP4B, CHMP4C and CHMP6. Interacts with VPS4B; the interaction suggests a heteromeric assembly with VPS4B. Interacts with SPAST. Interacts with IST1. Interacts with ZFYVE19/ANCHR; leading to retain it at midbody. In terms of tissue distribution, highly expressed in testis and moderately in heart and brain. Not detected in spleen, lung, liver, skeletal muscle or kidney.

Its subcellular location is the late endosome membrane. It localises to the midbody. The protein resides in the cytoplasm. The protein localises to the cytoskeleton. It is found in the spindle. The enzyme catalyses ATP + H2O = ADP + phosphate + H(+). Involved in late steps of the endosomal multivesicular bodies (MVB) pathway. Recognizes membrane-associated ESCRT-III assemblies and catalyzes their disassembly, possibly in combination with membrane fission. Redistributes the ESCRT-III components to the cytoplasm for further rounds of MVB sorting. MVBs contain intraluminal vesicles (ILVs) that are generated by invagination and scission from the limiting membrane of the endosome and mostly are delivered to lysosomes enabling degradation of membrane proteins, such as stimulated growth factor receptors, lysosomal enzymes and lipids. It is required for proper accomplishment of various processes including the regulation of endosome size, primary cilium organization, mitotic spindle organization and chromosome segregation, and nuclear envelope sealing and spindle disassembly during anaphase. In conjunction with the ESCRT machinery also appears to function in topologically equivalent membrane fission events, such as the terminal stages of cytokinesis. Involved in cytokinesis: retained at the midbody by ZFYVE19/ANCHR and CHMP4C until abscission checkpoint signaling is terminated at late cytokinesis. It is then released following dephosphorylation of CHMP4C, leading to abscission. VPS4A/B are required for the exosomal release of SDCBP, CD63 and syndecan. Critical for normal erythroblast cytokinesis and correct erythropoiesis. In Mus musculus (Mouse), this protein is Vacuolar protein sorting-associated protein 4A.